We begin with the raw amino-acid sequence, 209 residues long: Protocatechuate 3,4-dioxygenase alpha chain (209 aa).

Arg142 contacts 3,4-dihydroxybenzoate.

The protein belongs to the intradiol ring-cleavage dioxygenase family. In terms of assembly, the enzyme is an oligomer of 12 copies of the alpha and beta chains. Requires Fe(3+) as cofactor.

It catalyses the reaction 3,4-dihydroxybenzoate + O2 = 3-carboxy-cis,cis-muconate + 2 H(+). The protein operates within aromatic compound metabolism; beta-ketoadipate pathway; 3-carboxy-cis,cis-muconate from 3,4-dihydroxybenzoate: step 1/1. Plays an essential role in the utilization of numerous aromatic and hydroaromatic compounds via the beta-ketoadipate pathway. The chain is Protocatechuate 3,4-dioxygenase alpha chain (pcaG) from Acinetobacter baylyi (strain ATCC 33305 / BD413 / ADP1).